A 455-amino-acid polypeptide reads, in one-letter code: tRNA modification GTPase MnmE (455 aa).

(6S)-5-formyl-5,6,7,8-tetrahydrofolate is bound by residues Arg26, Glu86, and Arg125. Residues 222–376 (GLKTAIIGRP…VEEKINQIFF (155 aa)) enclose the TrmE-type G domain. Residue Asn232 coordinates K(+). GTP is bound by residues 232-237 (NVGKSS), 251-257 (TDIAGTT), and 276-279 (DTAG). Ser236 lines the Mg(2+) pocket. Positions 251, 253, and 256 each coordinate K(+). Thr257 is a Mg(2+) binding site. A (6S)-5-formyl-5,6,7,8-tetrahydrofolate-binding site is contributed by Lys455.

Belongs to the TRAFAC class TrmE-Era-EngA-EngB-Septin-like GTPase superfamily. TrmE GTPase family. Homodimer. Heterotetramer of two MnmE and two MnmG subunits. Requires K(+) as cofactor.

The protein localises to the cytoplasm. Functionally, exhibits a very high intrinsic GTPase hydrolysis rate. Involved in the addition of a carboxymethylaminomethyl (cmnm) group at the wobble position (U34) of certain tRNAs, forming tRNA-cmnm(5)s(2)U34. In Lactococcus lactis subsp. cremoris (strain SK11), this protein is tRNA modification GTPase MnmE.